The sequence spans 877 residues: Probable sulfate permease C3H7.02 (877 aa).

13 helical membrane passes run 133 to 153 (WLVY…PQGM), 161 to 181 (LPAQ…CIFA), 186 to 206 (VSIG…ANVQ), 221 to 241 (LALL…GFII), 243 to 263 (FIPV…IMAG), 292 to 312 (LPHT…LYLV), 329 to 349 (VFFL…TAIS), 384 to 404 (LCAD…LEHI), 424 to 444 (LIAM…PATG), 461 to 481 (LGGI…TGAF), 484 to 504 (IPNA…IIPW), 518 to 538 (ALIF…NGIY), and 543 to 563 (LSAA…LGIL). One can recognise an STAS domain in the interval 594–747 (NLTVRDPPAG…SRSIEVGSAA (154 aa)). 2 disordered regions span residues 643–663 (KASD…APEV) and 793–821 (ADSD…TFSH). The span at 801-821 (SDDKDKKVEGHRPSQDPTFSH) shows a compositional bias: basic and acidic residues.

Belongs to the SLC26A/SulP transporter (TC 2.A.53) family.

Its subcellular location is the membrane. Functionally, high affinity uptake of sulfate into the cell. This chain is Probable sulfate permease C3H7.02, found in Schizosaccharomyces pombe (strain 972 / ATCC 24843) (Fission yeast).